Reading from the N-terminus, the 138-residue chain is MAVLPDKEKLLRNFLRCANWEEKYLYIIELGQRMPELHDEDKSPQNSVQGCQSQVWIVMRQNAQGIIELQGDSDAAIVKGLIAVVFILYDQMTPQDIVNFDVRPWFEKMALTQHLTPSRSQGLEAMIRAIRAKAAALS.

The active-site Cysteine persulfide intermediate is cysteine 51.

It belongs to the SufE family. As to quaternary structure, homodimer. Interacts with SufS.

It localises to the cytoplasm. It functions in the pathway cofactor biosynthesis; iron-sulfur cluster biosynthesis. Participates in cysteine desulfuration mediated by SufS. Cysteine desulfuration mobilizes sulfur from L-cysteine to yield L-alanine and constitutes an essential step in sulfur metabolism for biosynthesis of a variety of sulfur-containing biomolecules. Functions as a sulfur acceptor for SufS, by mediating the direct transfer of the sulfur atom from the S-sulfanylcysteine of SufS, an intermediate product of cysteine desulfuration process. This is Cysteine desulfuration protein SufE from Escherichia fergusonii (strain ATCC 35469 / DSM 13698 / CCUG 18766 / IAM 14443 / JCM 21226 / LMG 7866 / NBRC 102419 / NCTC 12128 / CDC 0568-73).